A 291-amino-acid chain; its full sequence is ATP synthase gamma chain (291 aa).

It belongs to the ATPase gamma chain family. F-type ATPases have 2 components, CF(1) - the catalytic core - and CF(0) - the membrane proton channel. CF(1) has five subunits: alpha(3), beta(3), gamma(1), delta(1), epsilon(1). CF(0) has three main subunits: a, b and c.

It is found in the cell inner membrane. In terms of biological role, produces ATP from ADP in the presence of a proton gradient across the membrane. The gamma chain is believed to be important in regulating ATPase activity and the flow of protons through the CF(0) complex. The polypeptide is ATP synthase gamma chain (Neisseria meningitidis serogroup B (strain ATCC BAA-335 / MC58)).